Reading from the N-terminus, the 178-residue chain is Cytochrome b6-f complex iron-sulfur subunit 2 (178 aa).

A helical membrane pass occupies residues 17-36 (LLNFFTGAIVATTASAAIYP). In terms of domain architecture, Rieske spans 61–161 (GHPIPASQIL…VQVKDDYIWI (101 aa)). Cys107, His109, Cys125, and His128 together coordinate [2Fe-2S] cluster. Cys112 and Cys127 are disulfide-bonded.

The protein belongs to the Rieske iron-sulfur protein family. As to quaternary structure, the 4 large subunits of the cytochrome b6-f complex are cytochrome b6, subunit IV (17 kDa polypeptide, PetD), cytochrome f and the Rieske protein, while the 4 small subunits are PetG, PetL, PetM and PetN. The complex functions as a dimer. Requires [2Fe-2S] cluster as cofactor.

It localises to the cellular thylakoid membrane. It catalyses the reaction 2 oxidized [plastocyanin] + a plastoquinol + 2 H(+)(in) = 2 reduced [plastocyanin] + a plastoquinone + 4 H(+)(out). Component of the cytochrome b6-f complex, which mediates electron transfer between photosystem II (PSII) and photosystem I (PSI), cyclic electron flow around PSI, and state transitions. This is Cytochrome b6-f complex iron-sulfur subunit 2 from Nostoc sp. (strain PCC 7120 / SAG 25.82 / UTEX 2576).